An 81-amino-acid polypeptide reads, in one-letter code: Omega-conotoxin-like TxO4 (81 aa).

A signal peptide spans Met-1–Ala-22. The propeptide occupies Val-23–Arg-52. 3 disulfide bridges follow: Cys-55–Cys-72, Cys-62–Cys-76, and Cys-71–Cys-80. Pro-70 bears the 4-hydroxyproline; partial mark. At Trp-75 the chain carries 6'-bromotryptophan; partial.

This sequence belongs to the conotoxin O1 superfamily. TxO4 is found with and without hydroxyproline and these two forms have a bromotryptophan. Truncated TxO4 is found with and without bromotryptophan, and these two forms have no hydroxyproline. Expressed by the venom duct.

It is found in the secreted. In terms of biological role, omega-conotoxins act at presynaptic membranes, they bind and block voltage-gated calcium channels (Cav). The polypeptide is Omega-conotoxin-like TxO4 (Conus textile (Cloth-of-gold cone)).